A 429-amino-acid chain; its full sequence is 3-phosphoshikimate 1-carboxyvinyltransferase (429 aa).

Lys21, Ser22, and Arg26 together coordinate 3-phosphoshikimate. A phosphoenolpyruvate-binding site is contributed by Lys21. The phosphoenolpyruvate site is built by Gly94 and Arg122. 3-phosphoshikimate-binding residues include Ser167, Gln169, Asp315, and Lys342. Phosphoenolpyruvate is bound at residue Gln169. The active-site Proton acceptor is Asp315. Phosphoenolpyruvate is bound by residues Arg346 and Arg388.

The protein belongs to the EPSP synthase family. As to quaternary structure, monomer.

It is found in the cytoplasm. It catalyses the reaction 3-phosphoshikimate + phosphoenolpyruvate = 5-O-(1-carboxyvinyl)-3-phosphoshikimate + phosphate. It participates in metabolic intermediate biosynthesis; chorismate biosynthesis; chorismate from D-erythrose 4-phosphate and phosphoenolpyruvate: step 6/7. Functionally, catalyzes the transfer of the enolpyruvyl moiety of phosphoenolpyruvate (PEP) to the 5-hydroxyl of shikimate-3-phosphate (S3P) to produce enolpyruvyl shikimate-3-phosphate and inorganic phosphate. The polypeptide is 3-phosphoshikimate 1-carboxyvinyltransferase (Desulforamulus reducens (strain ATCC BAA-1160 / DSM 100696 / MI-1) (Desulfotomaculum reducens)).